Reading from the N-terminus, the 167-residue chain is MAEHQINYASGLPVVLTSVDKLVQWGRSNSLWALSYGLACCAIEMMAAGGSRYDFDRFGTIFRASPRHSEVMIIAGTLCKKHAEFTRRLYDQMPDPKWVISMGSCANTGGMFNTYSTVQGVDRIIPVDIYVPGCAPRPESFQFALMILQKKIRKEKASRKIAPKRLV.

The [4Fe-4S] cluster site is built by Cys-40, Cys-41, Cys-105, and Cys-134.

This sequence belongs to the complex I 20 kDa subunit family. NDH-1 is composed of 14 different subunits. Subunits NuoB, C, D, E, F, and G constitute the peripheral sector of the complex. It depends on [4Fe-4S] cluster as a cofactor.

It is found in the cell inner membrane. The enzyme catalyses a quinone + NADH + 5 H(+)(in) = a quinol + NAD(+) + 4 H(+)(out). NDH-1 shuttles electrons from NADH, via FMN and iron-sulfur (Fe-S) centers, to quinones in the respiratory chain. The immediate electron acceptor for the enzyme in this species is believed to be ubiquinone. Couples the redox reaction to proton translocation (for every two electrons transferred, four hydrogen ions are translocated across the cytoplasmic membrane), and thus conserves the redox energy in a proton gradient. This chain is NADH-quinone oxidoreductase subunit B, found in Campylobacter jejuni (strain RM1221).